Reading from the N-terminus, the 1404-residue chain is Clustered mitochondria protein homolog (1404 aa).

The region spanning 357-646 is the Clu domain; the sequence is HTHHADALRS…RLNPVDINWL (290 aa). Acidic residues predominate over residues 528-540; sequence ADELPEADGETTE. Disordered regions lie at residues 528–561, 706–735, 996–1046, and 1337–1372; these read ADEL…SNKA, DAKA…ERLD, GCHG…ARAT, and SERQ…GNGT. Over residues 706-723 the composition is skewed to basic and acidic residues; sequence DAKAKEAASKEDGEKTEA. 2 stretches are compositionally biased toward low complexity: residues 1021 to 1046 and 1358 to 1372; these read NEQQ…ARAT and AAIT…GNGT.

It belongs to the CLU family. May associate with the eukaryotic translation initiation factor 3 (eIF-3) complex.

The protein resides in the cytoplasm. In terms of biological role, mRNA-binding protein involved in proper cytoplasmic distribution of mitochondria. In Mycosarcoma maydis (Corn smut fungus), this protein is Clustered mitochondria protein homolog.